The primary structure comprises 783 residues: Endonuclease MutS2 (783 aa).

328 to 335 (GPNTGGKT) contacts ATP. The 76-residue stretch at 708–783 (LDLRGKRYEE…GSGCTIATLG (76 aa)) folds into the Smr domain.

The protein belongs to the DNA mismatch repair MutS family. MutS2 subfamily. As to quaternary structure, homodimer. Binds to stalled ribosomes, contacting rRNA.

Functionally, endonuclease that is involved in the suppression of homologous recombination and thus may have a key role in the control of bacterial genetic diversity. Its function is as follows. Acts as a ribosome collision sensor, splitting the ribosome into its 2 subunits. Detects stalled/collided 70S ribosomes which it binds and splits by an ATP-hydrolysis driven conformational change. Acts upstream of the ribosome quality control system (RQC), a ribosome-associated complex that mediates the extraction of incompletely synthesized nascent chains from stalled ribosomes and their subsequent degradation. Probably generates substrates for RQC. This is Endonuclease MutS2 from Streptococcus thermophilus (strain ATCC BAA-250 / LMG 18311).